Here is a 451-residue protein sequence, read N- to C-terminus: D-aminoacyl-tRNA deacylase (451 aa).

The tract at residues 410–437 is disordered; the sequence is RTADIPEGPKFGKLASGESVEIDGEEID.

It belongs to the DtdA deacylase family. As to quaternary structure, monomer. Zn(2+) serves as cofactor.

It carries out the reaction a D-aminoacyl-tRNA + H2O = a tRNA + a D-alpha-amino acid + H(+). The catalysed reaction is glycyl-tRNA(Ala) + H2O = tRNA(Ala) + glycine + H(+). Its function is as follows. D-aminoacyl-tRNA deacylase with broad substrate specificity. By recycling D-aminoacyl-tRNA to D-amino acids and free tRNA molecules, this enzyme counteracts the toxicity associated with the formation of D-aminoacyl-tRNA entities in vivo. The chain is D-aminoacyl-tRNA deacylase from Haloarcula marismortui (strain ATCC 43049 / DSM 3752 / JCM 8966 / VKM B-1809) (Halobacterium marismortui).